A 252-amino-acid polypeptide reads, in one-letter code: Proteasome subunit alpha 1 (252 aa).

M1 bears the N-acetylmethionine; alternate mark.

This sequence belongs to the peptidase T1A family. In terms of assembly, the 20S proteasome core is composed of 14 alpha and 14 beta subunits that assemble into four stacked heptameric rings, resulting in a barrel-shaped structure. The two inner rings, each composed of seven catalytic beta subunits, are sandwiched by two outer rings, each composed of seven alpha subunits. H.volcanii produces at least 2 types of 20S proteasomes: an alpha1-beta proteasome and a proteasome containing all three subunits (alpha1, alpha2, and beta) that appears to be asymmetrical with homo-oligomeric alpha1 and alpha2 rings positioned on separate ends. The catalytic chamber with the active sites is on the inside of the barrel. Has probably a gated structure, the ends of the cylinder being occluded by the N-termini of the alpha-subunits. Is likely capped at one or both ends by the proteasome regulatory ATPase, PAN. Acetylated. The acetylated form at Met-1 was shown to be in 100-fold excess of the unacetylated form with the initiator methionine removed in whole cells and purified 20S proteasomes.

It is found in the cytoplasm. The formation of the proteasomal ATPase PAN-20S proteasome complex, via the docking of the C-termini of PAN into the intersubunit pockets in the alpha-rings, triggers opening of the gate for substrate entry. Interconversion between the open-gate and close-gate conformations leads to a dynamic regulation of the 20S proteasome proteolysis activity. In vitro, the chymotrypsin-like activity of the alpha1-beta proteasome is potently inhibited by carbobenzoxyl-leucinyl-leucinyl-leucinal-H (MG132) and significantly by N-acetyl-leucinyl-leucinyl-norleucinal-H (calpain inhibitor I). Its function is as follows. Component of the proteasome core, a large protease complex with broad specificity involved in protein degradation. The H.volcanii alpha1-beta proteasome is able to cleave oligopeptides after Phe, Tyr and Trp, poorly after Glu but not after Arg. Thus, displays chymotrypsin-like activity, low caspase-like activity but no trypsin-like activity. The polypeptide is Proteasome subunit alpha 1 (Haloferax volcanii (strain ATCC 29605 / DSM 3757 / JCM 8879 / NBRC 14742 / NCIMB 2012 / VKM B-1768 / DS2) (Halobacterium volcanii)).